The primary structure comprises 362 residues: Peptide chain release factor 1 (362 aa).

Gln237 carries the post-translational modification N5-methylglutamine.

Belongs to the prokaryotic/mitochondrial release factor family. Methylated by PrmC. Methylation increases the termination efficiency of RF1.

It localises to the cytoplasm. Its function is as follows. Peptide chain release factor 1 directs the termination of translation in response to the peptide chain termination codons UAG and UAA. In Aliivibrio fischeri (strain ATCC 700601 / ES114) (Vibrio fischeri), this protein is Peptide chain release factor 1.